Here is a 293-residue protein sequence, read N- to C-terminus: Elongation factor Ts (293 aa).

Positions 79–82 (TDFV) are involved in Mg(2+) ion dislocation from EF-Tu.

This sequence belongs to the EF-Ts family.

Its subcellular location is the cytoplasm. Its function is as follows. Associates with the EF-Tu.GDP complex and induces the exchange of GDP to GTP. It remains bound to the aminoacyl-tRNA.EF-Tu.GTP complex up to the GTP hydrolysis stage on the ribosome. The protein is Elongation factor Ts of Exiguobacterium sibiricum (strain DSM 17290 / CCUG 55495 / CIP 109462 / JCM 13490 / 255-15).